The sequence spans 497 residues: Pancreatic alpha-amylase (497 aa).

The residue at position 1 (glutamine 1) is a Pyrrolidone carboxylic acid. 3 disulfide bridges follow: cysteine 28-cysteine 86, cysteine 70-cysteine 115, and cysteine 141-cysteine 160. Positions 100, 158, and 167 each coordinate Ca(2+). Position 195 (arginine 195) interacts with chloride. Catalysis depends on aspartate 197, which acts as the Nucleophile. Histidine 201 is a Ca(2+) binding site. Glutamate 233 (proton donor) is an active-site residue. Positions 298 and 337 each coordinate chloride. Intrachain disulfides connect cysteine 379/cysteine 385 and cysteine 451/cysteine 463.

It belongs to the glycosyl hydrolase 13 family. Monomer. Ca(2+) is required as a cofactor. Chloride serves as cofactor.

Its subcellular location is the secreted. It is found in the extracellular space. The catalysed reaction is Endohydrolysis of (1-&gt;4)-alpha-D-glucosidic linkages in polysaccharides containing three or more (1-&gt;4)-alpha-linked D-glucose units.. The polypeptide is Pancreatic alpha-amylase (Struthio camelus (Common ostrich)).